Reading from the N-terminus, the 453-residue chain is MSHDSEPQPVTAHPAGPLTGALKPPGDKSISHRAMIFGLLSVGETRVEGLLEGDDVLRTAAAVKALGAQVTREGEGRWRIVGVGIGGMQDPVGVLDFGNAGTGSRLMMGVVGGQPVTATFDGDASLRKRPMRRILDPILKMGAEVVSEAEGGRVPLTLRGPREAIPIRYELPVASAQIKSAVLLAGLNAPGTTTVIEKAASRDHTERMLRLFGADVSVTPSGEGGHGRTVTLTGQPTLRGTDVIVPADPSSAAFPLVAALIVPGSEVILRGVMMNPLRTGLITTLIEMGADIERFDEREEGGETVADLRVRASRLRGVDVPAERAPSMIDEYPILAVAAAFAEGTTRMNGLHELRVKESDRLAAVAAGLAANGVGHDIEGDDLIVTGNGGPPAGGGTVATHLDHRIAMAFLVMGLATRKPVTVDDGAMIATSFPSFRPTMLALGARIEDGAAA.

Residues 1 to 25 form a disordered region; the sequence is MSHDSEPQPVTAHPAGPLTGALKPP. Lysine 28, serine 29, and arginine 33 together coordinate 3-phosphoshikimate. Residue lysine 28 coordinates phosphoenolpyruvate. Residues glycine 101 and arginine 129 each contribute to the phosphoenolpyruvate site. Residues serine 175, glutamine 177, aspartate 330, and lysine 357 each contribute to the 3-phosphoshikimate site. Glutamine 177 is a phosphoenolpyruvate binding site. The active-site Proton acceptor is the aspartate 330. The phosphoenolpyruvate site is built by arginine 361 and arginine 405.

It belongs to the EPSP synthase family. As to quaternary structure, monomer.

The protein resides in the cytoplasm. It carries out the reaction 3-phosphoshikimate + phosphoenolpyruvate = 5-O-(1-carboxyvinyl)-3-phosphoshikimate + phosphate. Its pathway is metabolic intermediate biosynthesis; chorismate biosynthesis; chorismate from D-erythrose 4-phosphate and phosphoenolpyruvate: step 6/7. In terms of biological role, catalyzes the transfer of the enolpyruvyl moiety of phosphoenolpyruvate (PEP) to the 5-hydroxyl of shikimate-3-phosphate (S3P) to produce enolpyruvyl shikimate-3-phosphate and inorganic phosphate. The chain is 3-phosphoshikimate 1-carboxyvinyltransferase from Methylorubrum populi (strain ATCC BAA-705 / NCIMB 13946 / BJ001) (Methylobacterium populi).